Reading from the N-terminus, the 713-residue chain is Ribosomal RNA large subunit methyltransferase K/L (713 aa).

A THUMP domain is found at leucine 43–phenylalanine 154.

This sequence belongs to the methyltransferase superfamily. RlmKL family.

The protein resides in the cytoplasm. The enzyme catalyses guanosine(2445) in 23S rRNA + S-adenosyl-L-methionine = N(2)-methylguanosine(2445) in 23S rRNA + S-adenosyl-L-homocysteine + H(+). It catalyses the reaction guanosine(2069) in 23S rRNA + S-adenosyl-L-methionine = N(2)-methylguanosine(2069) in 23S rRNA + S-adenosyl-L-homocysteine + H(+). In terms of biological role, specifically methylates the guanine in position 2445 (m2G2445) and the guanine in position 2069 (m7G2069) of 23S rRNA. This chain is Ribosomal RNA large subunit methyltransferase K/L, found in Shewanella sp. (strain MR-7).